We begin with the raw amino-acid sequence, 211 residues long: Thiamine-phosphate synthase (211 aa).

Residues 37–41 and Asn-69 each bind 4-amino-2-methyl-5-(diphosphooxymethyl)pyrimidine; that span reads QLRIK. 2 residues coordinate Mg(2+): Asp-70 and Asp-89. 4-amino-2-methyl-5-(diphosphooxymethyl)pyrimidine is bound at residue Ser-108. 134 to 136 is a binding site for 2-[(2R,5Z)-2-carboxy-4-methylthiazol-5(2H)-ylidene]ethyl phosphate; that stretch reads TQT. Residue Lys-137 participates in 4-amino-2-methyl-5-(diphosphooxymethyl)pyrimidine binding. Residues Gly-166 and 186–187 contribute to the 2-[(2R,5Z)-2-carboxy-4-methylthiazol-5(2H)-ylidene]ethyl phosphate site; that span reads VS.

It belongs to the thiamine-phosphate synthase family. The cofactor is Mg(2+).

The catalysed reaction is 2-[(2R,5Z)-2-carboxy-4-methylthiazol-5(2H)-ylidene]ethyl phosphate + 4-amino-2-methyl-5-(diphosphooxymethyl)pyrimidine + 2 H(+) = thiamine phosphate + CO2 + diphosphate. The enzyme catalyses 2-(2-carboxy-4-methylthiazol-5-yl)ethyl phosphate + 4-amino-2-methyl-5-(diphosphooxymethyl)pyrimidine + 2 H(+) = thiamine phosphate + CO2 + diphosphate. It carries out the reaction 4-methyl-5-(2-phosphooxyethyl)-thiazole + 4-amino-2-methyl-5-(diphosphooxymethyl)pyrimidine + H(+) = thiamine phosphate + diphosphate. It participates in cofactor biosynthesis; thiamine diphosphate biosynthesis; thiamine phosphate from 4-amino-2-methyl-5-diphosphomethylpyrimidine and 4-methyl-5-(2-phosphoethyl)-thiazole: step 1/1. In terms of biological role, condenses 4-methyl-5-(beta-hydroxyethyl)thiazole monophosphate (THZ-P) and 2-methyl-4-amino-5-hydroxymethyl pyrimidine pyrophosphate (HMP-PP) to form thiamine monophosphate (TMP). This Enterobacter sp. (strain 638) protein is Thiamine-phosphate synthase.